The chain runs to 292 residues: Zinc finger protein OZF (292 aa).

10 C2H2-type zinc fingers span residues 16 to 38, 44 to 66, 72 to 94, 100 to 122, 128 to 150, 156 to 178, 184 to 206, 212 to 234, 240 to 262, and 268 to 290; these read FACKVCGKVFSHKSNLTEHEHFH, FECNECGKAFSQKQYVIKHQNTH, FECNECGKSFSQKENLLTHQKIH, FECKDCGKAFIQKSNLIRHQRTH, FVCKECGKTFSGKSNLTEHEKIH, FKCSECGTAFGQKKYLIKHQNIH, YECNECGKAFSQRTSLIVHVRIH, YECNVCGKAFSQSSSLTVHVRSH, YGCNECGKAFSQFSTLALHLRIH, and YQCSECGKAFSQKSHHIRHQKIH. Residues Lys-28, Lys-51, and Lys-56 each participate in a glycyl lysine isopeptide (Lys-Gly) (interchain with G-Cter in SUMO2) cross-link. Glycyl lysine isopeptide (Lys-Gly) (interchain with G-Cter in SUMO) cross-links involve residues Lys-157 and Lys-169. Lys-173 is covalently cross-linked (Glycyl lysine isopeptide (Lys-Gly) (interchain with G-Cter in SUMO2)). Residues 212 to 292 form an interaction with TERF2IP region; sequence YECNVCGKAF…HIRHQKIHTH (81 aa).

Belongs to the krueppel C2H2-type zinc-finger protein family. As to quaternary structure, binds DNA. Interacts with SUMO conjugating enzyme UBC9/UBE2I. Interacts with the telomeric protein TERF2IP. In terms of processing, sumoylated. As to expression, liver, skeletal and heart muscle, mammary cells. Very low levels in brain, lung, placenta and kidney. Strongly overexpressed in many pancreas and colorectal cancers. Increased gene copy numbers are detected in 3 of 12 tumor cell lines and 2 of 12 primary pancreatic carcinomas. Overexpressed in 80% of colorectal cancers.

Its subcellular location is the nucleus. In Homo sapiens (Human), this protein is Zinc finger protein OZF (ZNF146).